The following is a 288-amino-acid chain: 4-diphosphocytidyl-2-C-methyl-D-erythritol kinase (288 aa).

The active site involves lysine 13. 97-107 (PMGGGIGGGSS) lines the ATP pocket. Aspartate 139 is an active-site residue.

Belongs to the GHMP kinase family. IspE subfamily.

The catalysed reaction is 4-CDP-2-C-methyl-D-erythritol + ATP = 4-CDP-2-C-methyl-D-erythritol 2-phosphate + ADP + H(+). It functions in the pathway isoprenoid biosynthesis; isopentenyl diphosphate biosynthesis via DXP pathway; isopentenyl diphosphate from 1-deoxy-D-xylulose 5-phosphate: step 3/6. Its function is as follows. Catalyzes the phosphorylation of the position 2 hydroxy group of 4-diphosphocytidyl-2C-methyl-D-erythritol. The sequence is that of 4-diphosphocytidyl-2-C-methyl-D-erythritol kinase from Saccharophagus degradans (strain 2-40 / ATCC 43961 / DSM 17024).